Here is a 346-residue protein sequence, read N- to C-terminus: Dihydroorotate dehydrogenase (quinone) (346 aa).

Residues alanine 62–lysine 66 and threonine 86 contribute to the FMN site. Lysine 66 provides a ligand contact to substrate. Asparagine 111 to phenylalanine 115 is a substrate binding site. 2 residues coordinate FMN: asparagine 142 and asparagine 175. Asparagine 175 is a binding site for substrate. Serine 178 functions as the Nucleophile in the catalytic mechanism. Asparagine 180 contacts substrate. 2 residues coordinate FMN: lysine 211 and valine 239. Asparagine 240 to threonine 241 is a substrate binding site. FMN-binding positions include glycine 261, glycine 289, and tyrosine 310–threonine 311.

The protein belongs to the dihydroorotate dehydrogenase family. Type 2 subfamily. Monomer. It depends on FMN as a cofactor.

It is found in the cell membrane. The catalysed reaction is (S)-dihydroorotate + a quinone = orotate + a quinol. The protein operates within pyrimidine metabolism; UMP biosynthesis via de novo pathway; orotate from (S)-dihydroorotate (quinone route): step 1/1. Catalyzes the conversion of dihydroorotate to orotate with quinone as electron acceptor. In Thermus thermophilus (strain ATCC 27634 / DSM 579 / HB8), this protein is Dihydroorotate dehydrogenase (quinone).